The following is a 115-amino-acid chain: Glutaredoxin-like protein C5orf63 homolog (115 aa).

Cysteine 40 and cysteine 43 are oxidised to a cystine.

It belongs to the glutaredoxin family. YDR286C subfamily.

This is Glutaredoxin-like protein C5orf63 homolog from Mus musculus (Mouse).